The primary structure comprises 128 residues: Holo-[acyl-carrier-protein] synthase (128 aa).

Residues D8 and E60 each coordinate Mg(2+).

Belongs to the P-Pant transferase superfamily. AcpS family. The cofactor is Mg(2+).

The protein localises to the cytoplasm. The catalysed reaction is apo-[ACP] + CoA = holo-[ACP] + adenosine 3',5'-bisphosphate + H(+). Transfers the 4'-phosphopantetheine moiety from coenzyme A to a Ser of acyl-carrier-protein. The polypeptide is Holo-[acyl-carrier-protein] synthase (Anaeromyxobacter dehalogenans (strain 2CP-1 / ATCC BAA-258)).